A 389-amino-acid polypeptide reads, in one-letter code: MLLALAQWLQGDASFLRLFTYLTFRAVMATITALVIGLVCGPWVIRKLTQMKVGQAVRKDGPQTHLVKSGTPTMGGVLILIGIAVATLLWGDLTNRFIWIVMLVTFGFGVIGWVDDYRKVVYKDPRGMSSREKYFWQSVIGLFAAVYLAFSVSEANNVRVFDLFMAWVRSGLSMGLPARADLMLPFLKSISYPLGVWGFIALTYFVIVGASNAVNLTDGLDGLVIMPVVLVGASLGVFAYVMGSAVYSKYLLFPHIPGAGELLIFCSAMGGAGLAFLWYNTHPAQVFMGDVGALALGGALGTVAVIVRQEIVLFIMGGIFVAETLSVMLQVTWFKYTKRRYGEGRRIFKMAPLHHHFELSGWKETQVVVRFWIITLMLCLFGLSTLKLR.

Helical transmembrane passes span 25-45 (RAVMATITALVIGLVCGPWVI), 73-93 (TMGGVLILIGIAVATLLWGDL), 97-117 (FIWIVMLVTFGFGVIGWVDDY), 135-155 (FWQSVIGLFAAVYLAFSVSEA), 190-210 (ISYPLGVWGFIALTYFVIVGA), 222-242 (GLVIMPVVLVGASLGVFAYVM), 258-278 (GAGELLIFCSAMGGAGLAFLW), 286-306 (VFMGDVGALALGGALGTVAVI), 311-331 (IVLFIMGGIFVAETLSVMLQV), and 366-386 (QVVVRFWIITLMLCLFGLSTL).

Belongs to the glycosyltransferase 4 family. MraY subfamily. Mg(2+) serves as cofactor.

It is found in the cell inner membrane. It carries out the reaction UDP-N-acetyl-alpha-D-muramoyl-L-alanyl-gamma-D-glutamyl-meso-2,6-diaminopimeloyl-D-alanyl-D-alanine + di-trans,octa-cis-undecaprenyl phosphate = di-trans,octa-cis-undecaprenyl diphospho-N-acetyl-alpha-D-muramoyl-L-alanyl-D-glutamyl-meso-2,6-diaminopimeloyl-D-alanyl-D-alanine + UMP. The protein operates within cell wall biogenesis; peptidoglycan biosynthesis. Catalyzes the initial step of the lipid cycle reactions in the biosynthesis of the cell wall peptidoglycan: transfers peptidoglycan precursor phospho-MurNAc-pentapeptide from UDP-MurNAc-pentapeptide onto the lipid carrier undecaprenyl phosphate, yielding undecaprenyl-pyrophosphoryl-MurNAc-pentapeptide, known as lipid I. This Burkholderia pseudomallei (strain 1106a) protein is Phospho-N-acetylmuramoyl-pentapeptide-transferase.